The chain runs to 322 residues: tRNA U34 carboxymethyltransferase (322 aa).

Residues lysine 92, tryptophan 106, lysine 111, glycine 131, 153 to 155 (DPT), 181 to 182 (VE), methionine 196, tyrosine 200, and arginine 315 each bind carboxy-S-adenosyl-L-methionine.

The protein belongs to the class I-like SAM-binding methyltransferase superfamily. CmoB family. Homotetramer.

It catalyses the reaction carboxy-S-adenosyl-L-methionine + 5-hydroxyuridine(34) in tRNA = 5-carboxymethoxyuridine(34) in tRNA + S-adenosyl-L-homocysteine + H(+). In terms of biological role, catalyzes carboxymethyl transfer from carboxy-S-adenosyl-L-methionine (Cx-SAM) to 5-hydroxyuridine (ho5U) to form 5-carboxymethoxyuridine (cmo5U) at position 34 in tRNAs. The chain is tRNA U34 carboxymethyltransferase from Colwellia psychrerythraea (strain 34H / ATCC BAA-681) (Vibrio psychroerythus).